The sequence spans 447 residues: Tubulin beta-4 chain (447 aa).

GTP-binding residues include Q11, E71, S140, G144, T145, G146, N206, and N228. E71 contacts Mg(2+). The segment at Q428–A447 is disordered. The segment covering T431–A447 has biased composition (acidic residues).

The protein belongs to the tubulin family. Dimer of alpha and beta chains. A typical microtubule is a hollow water-filled tube with an outer diameter of 25 nm and an inner diameter of 15 nM. Alpha-beta heterodimers associate head-to-tail to form protofilaments running lengthwise along the microtubule wall with the beta-tubulin subunit facing the microtubule plus end conferring a structural polarity. Microtubules usually have 13 protofilaments but different protofilament numbers can be found in some organisms and specialized cells. It depends on Mg(2+) as a cofactor.

The protein localises to the cytoplasm. The protein resides in the cytoskeleton. Functionally, tubulin is the major constituent of microtubules, a cylinder consisting of laterally associated linear protofilaments composed of alpha- and beta-tubulin heterodimers. Microtubules grow by the addition of GTP-tubulin dimers to the microtubule end, where a stabilizing cap forms. Below the cap, tubulin dimers are in GDP-bound state, owing to GTPase activity of alpha-tubulin. This chain is Tubulin beta-4 chain (TUBB4), found in Zea mays (Maize).